The primary structure comprises 252 residues: Transcriptional regulatory protein HptR (252 aa).

In terms of domain architecture, Response regulatory spans 3–118 (KVVICDDERI…QLEVILGRLV (116 aa)). Asp-55 is modified (4-aspartylphosphate). Positions 153 to 250 (NQIVDQIKQS…QMSPSDYCKQ (98 aa)) constitute an HTH araC/xylS-type domain. 2 consecutive DNA-binding regions (H-T-H motif) follow at residues 170–191 (SDLIQHIDVSESYAMRTFKDHV) and 217–240 (HYEIADKVGFSEYKMFSYHFKKYL).

Phosphorylated by HptS.

Its subcellular location is the cytoplasm. Functionally, member of the two-component regulatory system HptS/HptR that regulates genes involved in hexose phosphate transport system in response to changes in extracellular phosphate sources. Activates uhpT expression to facilitate glucose-6-phosphate/G6P utilization by directly binding to its promoter. Antagonizes CcpA-dependent transcription of a subset of CcpA-regulated genes involved in antibiotic susceptibility. The polypeptide is Transcriptional regulatory protein HptR (hptR) (Staphylococcus aureus (strain NCTC 8325 / PS 47)).